The sequence spans 734 residues: Photosystem I P700 chlorophyll a apoprotein A2 (734 aa).

A run of 8 helical transmembrane segments spans residues 46–69 (IFAS…FHVA), 135–158 (LYTG…LHLQ), 175–199 (LNHH…HVAI), 273–291 (IAHH…GHMY), 330–353 (LHFQ…QHMY), 369–395 (AALY…IFFV), 417–439 (AIIS…LYVH), and 517–535 (FLVH…LILV). [4Fe-4S] cluster-binding residues include cysteine 559 and cysteine 568. A run of 2 helical transmembrane segments spans residues 575 to 596 (AFYL…YWHW) and 643 to 665 (LSVW…MFLI). Chlorophyll a contacts are provided by histidine 654, methionine 662, and tyrosine 670. Tryptophan 671 contacts phylloquinone. The chain crosses the membrane as a helical span at residues 707-727 (LVGLAHFSVGYVLTYAAFLIA).

It belongs to the PsaA/PsaB family. The PsaA/B heterodimer binds the P700 chlorophyll special pair and subsequent electron acceptors. PSI consists of a core antenna complex that captures photons, and an electron transfer chain that converts photonic excitation into a charge separation. The eukaryotic PSI reaction center is composed of at least 11 subunits. P700 is a chlorophyll a/chlorophyll a' dimer, A0 is one or more chlorophyll a, A1 is one or both phylloquinones and FX is a shared 4Fe-4S iron-sulfur center. is required as a cofactor.

The protein localises to the plastid. It localises to the chloroplast thylakoid membrane. The enzyme catalyses reduced [plastocyanin] + hnu + oxidized [2Fe-2S]-[ferredoxin] = oxidized [plastocyanin] + reduced [2Fe-2S]-[ferredoxin]. In terms of biological role, psaA and PsaB bind P700, the primary electron donor of photosystem I (PSI), as well as the electron acceptors A0, A1 and FX. PSI is a plastocyanin-ferredoxin oxidoreductase, converting photonic excitation into a charge separation, which transfers an electron from the donor P700 chlorophyll pair to the spectroscopically characterized acceptors A0, A1, FX, FA and FB in turn. Oxidized P700 is reduced on the lumenal side of the thylakoid membrane by plastocyanin. The protein is Photosystem I P700 chlorophyll a apoprotein A2 of Chlorokybus atmophyticus (Soil alga).